Here is a 360-residue protein sequence, read N- to C-terminus: MRVFNFSAGPAALPEEVLRQAADEMLDWHGSGMSVMEMSHRGKEFMSIHEAALADLRELLDVPASHRILFLQGGGIAENAIVPMNLLGSRQTADFVVTGSWSQKSFNEAKKYGTPHLAASGKTADGFTRAPARAEWQLSDDPAYVHLCTNETIDGVETFEIPDLGDIPLVADVSSHILSRPMDVAKYGVLFGGAQKNIGMAGVTVVIVREDLLDRALSICPSAFEWKTVAANNSLYNTPPTYAIYIAGLVFQWLKRQGGLEAIEARNIEKAKLLYDTIDASGFYLNKVEPAVRSRMNVPFFLADETRNEDFLAGAKARGLLQLKGHKSVGGMRASIYNAVPLEGVKALVEYMKDFEQRGA.

Residue R41 participates in L-glutamate binding. Residues W101, T152, D172, and Q195 each contribute to the pyridoxal 5'-phosphate site. The residue at position 196 (K196) is an N6-(pyridoxal phosphate)lysine. Residue 237–238 participates in pyridoxal 5'-phosphate binding; sequence NT.

Belongs to the class-V pyridoxal-phosphate-dependent aminotransferase family. SerC subfamily. As to quaternary structure, homodimer. Pyridoxal 5'-phosphate is required as a cofactor.

It localises to the cytoplasm. It catalyses the reaction O-phospho-L-serine + 2-oxoglutarate = 3-phosphooxypyruvate + L-glutamate. It carries out the reaction 4-(phosphooxy)-L-threonine + 2-oxoglutarate = (R)-3-hydroxy-2-oxo-4-phosphooxybutanoate + L-glutamate. It functions in the pathway amino-acid biosynthesis; L-serine biosynthesis; L-serine from 3-phospho-D-glycerate: step 2/3. Its pathway is cofactor biosynthesis; pyridoxine 5'-phosphate biosynthesis; pyridoxine 5'-phosphate from D-erythrose 4-phosphate: step 3/5. Its function is as follows. Catalyzes the reversible conversion of 3-phosphohydroxypyruvate to phosphoserine and of 3-hydroxy-2-oxo-4-phosphonooxybutanoate to phosphohydroxythreonine. The protein is Phosphoserine aminotransferase of Burkholderia ambifaria (strain ATCC BAA-244 / DSM 16087 / CCUG 44356 / LMG 19182 / AMMD) (Burkholderia cepacia (strain AMMD)).